The following is a 36-amino-acid chain: Glucagon-2 (36 aa).

The protein belongs to the glucagon family.

It localises to the secreted. In terms of biological role, glucagon plays a key role in glucose metabolism and homeostasis. Regulates blood glucose by increasing gluconeogenesis and decreasing glycolysis. This is Glucagon-2 from Huso dauricus (Kaluga sturgeon).